A 432-amino-acid chain; its full sequence is Trigger factor (432 aa).

The PPIase FKBP-type domain maps to 161–246 (GKRVSIDFVG…VNKVEARQLP (86 aa)).

Belongs to the FKBP-type PPIase family. Tig subfamily.

The protein localises to the cytoplasm. It carries out the reaction [protein]-peptidylproline (omega=180) = [protein]-peptidylproline (omega=0). Functionally, involved in protein export. Acts as a chaperone by maintaining the newly synthesized protein in an open conformation. Functions as a peptidyl-prolyl cis-trans isomerase. The polypeptide is Trigger factor (Vibrio vulnificus (strain CMCP6)).